The primary structure comprises 379 residues: Lipid-A-disaccharide synthase (379 aa).

The protein belongs to the LpxB family.

The catalysed reaction is a lipid X + a UDP-2-N,3-O-bis[(3R)-3-hydroxyacyl]-alpha-D-glucosamine = a lipid A disaccharide + UDP + H(+). The protein operates within bacterial outer membrane biogenesis; LPS lipid A biosynthesis. Its function is as follows. Condensation of UDP-2,3-diacylglucosamine and 2,3-diacylglucosamine-1-phosphate to form lipid A disaccharide, a precursor of lipid A, a phosphorylated glycolipid that anchors the lipopolysaccharide to the outer membrane of the cell. The chain is Lipid-A-disaccharide synthase from Idiomarina loihiensis (strain ATCC BAA-735 / DSM 15497 / L2-TR).